The primary structure comprises 333 residues: Glycerol-3-phosphate dehydrogenase [NAD(P)+] (333 aa).

NADPH is bound by residues Ser10, Trp11, His31, Arg32, and Lys105. Sn-glycerol 3-phosphate is bound by residues Lys105, Gly136, and Ser138. Ala140 is an NADPH binding site. Sn-glycerol 3-phosphate is bound by residues Lys191, Asp244, Ser254, Arg255, and Asn256. Residue Lys191 is the Proton acceptor of the active site. Arg255 contributes to the NADPH binding site. Residues Ile279 and Glu281 each coordinate NADPH.

This sequence belongs to the NAD-dependent glycerol-3-phosphate dehydrogenase family.

The protein localises to the cytoplasm. It catalyses the reaction sn-glycerol 3-phosphate + NAD(+) = dihydroxyacetone phosphate + NADH + H(+). It carries out the reaction sn-glycerol 3-phosphate + NADP(+) = dihydroxyacetone phosphate + NADPH + H(+). It functions in the pathway membrane lipid metabolism; glycerophospholipid metabolism. Functionally, catalyzes the reduction of the glycolytic intermediate dihydroxyacetone phosphate (DHAP) to sn-glycerol 3-phosphate (G3P), the key precursor for phospholipid synthesis. The protein is Glycerol-3-phosphate dehydrogenase [NAD(P)+] of Pelodictyon phaeoclathratiforme (strain DSM 5477 / BU-1).